The primary structure comprises 457 residues: Siroheme synthase (457 aa).

The precorrin-2 dehydrogenase /sirohydrochlorin ferrochelatase stretch occupies residues 1 to 204; sequence MDHLPIFCQL…NDQKAITETT (204 aa). NAD(+)-binding positions include 22-23 and 43-44; these read DV and LA. A Phosphoserine modification is found at Ser-128. The segment at 216–457 is uroporphyrinogen-III C-methyltransferase; it reads GEVVLVGAGP…RDKLNWFSNH (242 aa). Residue Pro-225 coordinates S-adenosyl-L-methionine. The active-site Proton acceptor is the Asp-248. The Proton donor role is filled by Lys-270. Residues 301 to 303, Ile-306, 331 to 332, Met-382, and Gly-411 each bind S-adenosyl-L-methionine; these read GGD and TA.

In the N-terminal section; belongs to the precorrin-2 dehydrogenase / sirohydrochlorin ferrochelatase family. It in the C-terminal section; belongs to the precorrin methyltransferase family.

It catalyses the reaction uroporphyrinogen III + 2 S-adenosyl-L-methionine = precorrin-2 + 2 S-adenosyl-L-homocysteine + H(+). It carries out the reaction precorrin-2 + NAD(+) = sirohydrochlorin + NADH + 2 H(+). The enzyme catalyses siroheme + 2 H(+) = sirohydrochlorin + Fe(2+). The protein operates within cofactor biosynthesis; adenosylcobalamin biosynthesis; precorrin-2 from uroporphyrinogen III: step 1/1. Its pathway is cofactor biosynthesis; adenosylcobalamin biosynthesis; sirohydrochlorin from precorrin-2: step 1/1. It participates in porphyrin-containing compound metabolism; siroheme biosynthesis; precorrin-2 from uroporphyrinogen III: step 1/1. It functions in the pathway porphyrin-containing compound metabolism; siroheme biosynthesis; siroheme from sirohydrochlorin: step 1/1. The protein operates within porphyrin-containing compound metabolism; siroheme biosynthesis; sirohydrochlorin from precorrin-2: step 1/1. In terms of biological role, multifunctional enzyme that catalyzes the SAM-dependent methylations of uroporphyrinogen III at position C-2 and C-7 to form precorrin-2 via precorrin-1. Then it catalyzes the NAD-dependent ring dehydrogenation of precorrin-2 to yield sirohydrochlorin. Finally, it catalyzes the ferrochelation of sirohydrochlorin to yield siroheme. The polypeptide is Siroheme synthase (Escherichia coli O8 (strain IAI1)).